A 108-amino-acid polypeptide reads, in one-letter code: T-cell acute lymphocytic leukemia protein 2 (108 aa).

Residues 2-54 enclose the bHLH domain; that stretch reads TRKIFTNTRERWRQQNVNSAFAKLRKLIPTHPPDKKLSKNETLRLAMRYINFL. The tract at residues 89 to 108 is disordered; the sequence is DRTLLENYQVPSPGPSHHIP.

The chain is T-cell acute lymphocytic leukemia protein 2 (TAL2) from Homo sapiens (Human).